The primary structure comprises 229 residues: 2-C-methyl-D-erythritol 4-phosphate cytidylyltransferase (229 aa).

The protein belongs to the IspD/TarI cytidylyltransferase family. IspD subfamily.

It carries out the reaction 2-C-methyl-D-erythritol 4-phosphate + CTP + H(+) = 4-CDP-2-C-methyl-D-erythritol + diphosphate. The protein operates within isoprenoid biosynthesis; isopentenyl diphosphate biosynthesis via DXP pathway; isopentenyl diphosphate from 1-deoxy-D-xylulose 5-phosphate: step 2/6. In terms of biological role, catalyzes the formation of 4-diphosphocytidyl-2-C-methyl-D-erythritol from CTP and 2-C-methyl-D-erythritol 4-phosphate (MEP). The chain is 2-C-methyl-D-erythritol 4-phosphate cytidylyltransferase from Shouchella clausii (strain KSM-K16) (Alkalihalobacillus clausii).